Reading from the N-terminus, the 492-residue chain is Nitrogenase molybdenum-iron protein alpha chain (492 aa).

Cysteine 62, cysteine 88, and cysteine 154 together coordinate [8Fe-7S] cluster. Positions 275 and 442 each coordinate [7Fe-Mo-9S-C-homocitryl] cluster.

It belongs to the NifD/NifK/NifE/NifN family. Tetramer of two alpha and two beta chains. Forms complex with the iron protein (nitrogenase component 2). The cofactor is [8Fe-7S] cluster. Requires [7Fe-Mo-9S-C-homocitryl] cluster as cofactor.

The catalysed reaction is N2 + 8 reduced [2Fe-2S]-[ferredoxin] + 16 ATP + 16 H2O = H2 + 8 oxidized [2Fe-2S]-[ferredoxin] + 2 NH4(+) + 16 ADP + 16 phosphate + 6 H(+). Nitrogenase holoenzyme is subject to 'conformational protection' by FeSII; under oxidizing conditions FeSII binds to the holoenzyme and reversibly protects it from oxidation. In terms of biological role, this molybdenum-iron protein is part of the nitrogenase complex that catalyzes the key enzymatic reactions in nitrogen fixation. The chain is Nitrogenase molybdenum-iron protein alpha chain (nifD) from Azotobacter vinelandii.